We begin with the raw amino-acid sequence, 470 residues long: 5-hydroxytryptamine receptor 2A (470 aa).

Positions 1-23 (MDVLFEDNAPLSPTTSSLMPSNG) are disordered. Topologically, residues 1-80 (MDVLFEDNAP…LQEKNWSALL (80 aa)) are extracellular. Over residues 10 to 21 (PLSPTTSSLMPS) the composition is skewed to low complexity. N-linked (GlcNAc...) asparagine glycosylation is found at N38, N44, N51, and N54. Residues 81–97 (TAVVIILTIAGNILVIM) traverse the membrane as a helical segment. Residues 98–111 (AVSLEKKLQNATNY) are Cytoplasmic-facing. A helical transmembrane segment spans residues 112-137 (FLMSLAIADMLLGFLVMPVSMLTILY). The Extracellular segment spans residues 138 to 146 (GYRWPLPSK). The helical transmembrane segment at 147–171 (LCAVWIYLDVLFSTASIMHLCAISL) threads the bilayer. A disulfide bond links C148 and C227. D155 contacts serotonin. A DRY motif; important for ligand-induced conformation changes motif is present at residues 172–174 (DRY). The Cytoplasmic segment spans residues 172–191 (DRYVAIQNPIHHSRFNSRTK). The helical transmembrane segment at 192–215 (AFLKIIAVWTISVGISMPIPVFGL) threads the bilayer. Topologically, residues 216–232 (QDDSKVFKEGSCLLADD) are extracellular. The chain crosses the membrane as a helical span at residues 233 to 258 (NFVLIGSFVSFFIPLTIMVITYFLTI). Over 259-321 (KSLQKEATLC…QSISNEQKAC (63 aa)) the chain is Cytoplasmic. S280 carries the phosphoserine modification. A helical membrane pass occupies residues 322-347 (KVLGIVFFLFVVMWCPFFITNIMAVI). N342 contributes to the serotonin binding site. A disulfide bridge connects residues C348 and C352. Residues 348–355 (CKESCNED) are Extracellular-facing. Residues 356–381 (IIGALLNVFVWIGYLSSAVNPLVYTL) form a helical membrane-spanning segment. Residues 375 to 379 (NPLVY) carry the NPxxY motif; important for ligand-induced conformation changes and signaling motif. The Cytoplasmic segment spans residues 382–470 (FNKTYRSAFS…NTVNEKVSCV (89 aa)). The PDZ-binding signature appears at 468-470 (SCV).

This sequence belongs to the G-protein coupled receptor 1 family. As to quaternary structure, interacts (via C-terminus) with MPDZ and PATJ. May interact (via C-terminus) with MPP3, PRDX6, DLG4, DLG1, CASK, APBA1 and MAGI2. Interacts with GRM2 and DRD2; this may affect signaling. Ubiquitous.

Its subcellular location is the cell membrane. The protein resides in the cell projection. The protein localises to the dendrite. It is found in the axon. It localises to the cytoplasmic vesicle. Its subcellular location is the membrane. The protein resides in the caveola. The protein localises to the presynapse. Its activity is regulated as follows. G-protein coupled receptor activity is regulated by lipids: oleamide increases HTR2A-mediated activity. In terms of biological role, G-protein coupled receptor for 5-hydroxytryptamine (serotonin). Also functions as a receptor for various drugs and psychoactive substances, including mescaline, psilocybin, 1-(2,5-dimethoxy-4-iodophenyl)-2-aminopropane (DOI) and lysergic acid diethylamide (LSD). Ligand binding causes a conformation change that triggers signaling via guanine nucleotide-binding proteins (G proteins) and modulates the activity of downstream effectors. HTR2A is coupled to G(q)/G(11) G alpha proteins and activates phospholipase C-beta, releasing diacylglycerol (DAG) and inositol 1,4,5-trisphosphate (IP3) second messengers that modulate the activity of phosphatidylinositol 3-kinase and promote the release of Ca(2+) ions from intracellular stores, respectively. Beta-arrestin family members inhibit signaling via G proteins and mediate activation of alternative signaling pathways. Affects neural activity, perception, cognition and mood. Plays a role in the regulation of behavior, including responses to anxiogenic situations and psychoactive substances. Plays a role in intestinal smooth muscle contraction, and may play a role in arterial vasoconstriction. In Canis lupus familiaris (Dog), this protein is 5-hydroxytryptamine receptor 2A (HTR2A).